The primary structure comprises 141 residues: 3-hydroxyacyl-[acyl-carrier-protein] dehydratase FabZ (141 aa).

The active site involves His-49.

It belongs to the thioester dehydratase family. FabZ subfamily.

It is found in the cytoplasm. It carries out the reaction a (3R)-hydroxyacyl-[ACP] = a (2E)-enoyl-[ACP] + H2O. In terms of biological role, involved in unsaturated fatty acids biosynthesis. Catalyzes the dehydration of short chain beta-hydroxyacyl-ACPs and long chain saturated and unsaturated beta-hydroxyacyl-ACPs. This is 3-hydroxyacyl-[acyl-carrier-protein] dehydratase FabZ from Clostridium acetobutylicum (strain ATCC 824 / DSM 792 / JCM 1419 / IAM 19013 / LMG 5710 / NBRC 13948 / NRRL B-527 / VKM B-1787 / 2291 / W).